The chain runs to 295 residues: Phosphoribosylaminoimidazole-succinocarboxamide synthase (295 aa).

It belongs to the SAICAR synthetase family.

The catalysed reaction is 5-amino-1-(5-phospho-D-ribosyl)imidazole-4-carboxylate + L-aspartate + ATP = (2S)-2-[5-amino-1-(5-phospho-beta-D-ribosyl)imidazole-4-carboxamido]succinate + ADP + phosphate + 2 H(+). Its pathway is purine metabolism; IMP biosynthesis via de novo pathway; 5-amino-1-(5-phospho-D-ribosyl)imidazole-4-carboxamide from 5-amino-1-(5-phospho-D-ribosyl)imidazole-4-carboxylate: step 1/2. This is Phosphoribosylaminoimidazole-succinocarboxamide synthase from Halorhodospira halophila (strain DSM 244 / SL1) (Ectothiorhodospira halophila (strain DSM 244 / SL1)).